Reading from the N-terminus, the 119-residue chain is Large ribosomal subunit protein bL20 (119 aa).

This sequence belongs to the bacterial ribosomal protein bL20 family.

Functionally, binds directly to 23S ribosomal RNA and is necessary for the in vitro assembly process of the 50S ribosomal subunit. It is not involved in the protein synthesizing functions of that subunit. In Paracoccus denitrificans (strain Pd 1222), this protein is Large ribosomal subunit protein bL20.